The chain runs to 52 residues: AANQHLCGSHLVEALYLVCGERGFFYTPNKVGIVEQCCHSPCSLYDLENYCN.

3 disulfide bridges follow: Cys-7/Cys-38, Cys-19/Cys-51, and Cys-37/Cys-42.

This sequence belongs to the insulin family. Heterodimer of a B chain and an A chain linked by two disulfide bonds.

It localises to the secreted. Functionally, insulin decreases blood glucose concentration. It increases cell permeability to monosaccharides, amino acids and fatty acids. It accelerates glycolysis, the pentose phosphate cycle, and glycogen synthesis in liver. The polypeptide is Insulin (ins) (Acipenser gueldenstaedtii (Russian sturgeon)).